The chain runs to 109 residues: Flagellar hook-basal body complex protein FliE (109 aa).

Residues 1-38 (MQAIHNDKSLLSPFSELNTDNRTKREESGSTFKEQKGG) form a disordered region. Basic and acidic residues predominate over residues 19 to 38 (TDNRTKREESGSTFKEQKGG).

This sequence belongs to the FliE family.

Its subcellular location is the bacterial flagellum basal body. The protein is Flagellar hook-basal body complex protein FliE of Helicobacter pylori (strain P12).